A 378-amino-acid chain; its full sequence is Inner membrane protein YibH (378 aa).

The Periplasmic portion of the chain corresponds to 1-3 (MDL). Residues 4 to 24 (LIVLTYVALAWAVFKIFRIPV) traverse the membrane as a helical segment. The Cytoplasmic segment spans residues 25–26 (NQ). Residues 27–47 (WTLATAALGGVFLVSGLILLM) traverse the membrane as a helical segment. Residues 48–54 (NYNHPYT) are Periplasmic-facing. Residues 55-75 (FTAQKAVIAIPITPQVTGIVT) traverse the membrane as a helical segment. Topologically, residues 76–232 (EVTDKNNQLI…RAPSNGYVTQ (157 aa)) are cytoplasmic. A helical membrane pass occupies residues 233–253 (VLIRPGTYAAALPLRPVMVFI). The Periplasmic portion of the chain corresponds to 254-280 (PEQKRQIVAQFRQNSLLRLKPGDDAEV). Residues 281–301 (VFNALPGQVFHGKLTSILPVV) form a helical membrane-spanning segment. Residues 302-309 (PGGSYQAQ) are Cytoplasmic-facing. A helical transmembrane segment spans residues 310 to 330 (GVLQSLTVVPGTDGVLGTIEL). Topologically, residues 331–378 (DPNDDIDALPDGIYAQVAVYSDHFSHVSVMRKVLLRMTSWMHYLYLDH) are periplasmic.

Belongs to the membrane fusion protein (MFP) (TC 8.A.1) family.

The protein localises to the cell inner membrane. In Escherichia coli O157:H7, this protein is Inner membrane protein YibH (yibH).